The chain runs to 305 residues: Oxygen-dependent coproporphyrinogen-III oxidase (305 aa).

Serine 97 lines the substrate pocket. A divalent metal cation contacts are provided by histidine 101 and histidine 111. The Proton donor role is filled by histidine 111. Residue 113-115 coordinates substrate; the sequence is NVR. A divalent metal cation contacts are provided by histidine 150 and histidine 180. The tract at residues 245–280 is important for dimerization; that stretch reads YVEFNLVWDRGTHFGLQSGGRTESILLSMPPLASWA. 263-265 contacts substrate; sequence GGR.

Belongs to the aerobic coproporphyrinogen-III oxidase family. In terms of assembly, homodimer. A divalent metal cation is required as a cofactor.

It localises to the cytoplasm. It catalyses the reaction coproporphyrinogen III + O2 + 2 H(+) = protoporphyrinogen IX + 2 CO2 + 2 H2O. It functions in the pathway porphyrin-containing compound metabolism; protoporphyrin-IX biosynthesis; protoporphyrinogen-IX from coproporphyrinogen-III (O2 route): step 1/1. In terms of biological role, involved in the heme biosynthesis. Catalyzes the aerobic oxidative decarboxylation of propionate groups of rings A and B of coproporphyrinogen-III to yield the vinyl groups in protoporphyrinogen-IX. The protein is Oxygen-dependent coproporphyrinogen-III oxidase of Variovorax paradoxus (strain S110).